The sequence spans 98 residues: Aspartyl/glutamyl-tRNA(Asn/Gln) amidotransferase subunit C (98 aa).

It belongs to the GatC family. Heterotrimer of A, B and C subunits.

The catalysed reaction is L-glutamyl-tRNA(Gln) + L-glutamine + ATP + H2O = L-glutaminyl-tRNA(Gln) + L-glutamate + ADP + phosphate + H(+). It catalyses the reaction L-aspartyl-tRNA(Asn) + L-glutamine + ATP + H2O = L-asparaginyl-tRNA(Asn) + L-glutamate + ADP + phosphate + 2 H(+). In terms of biological role, allows the formation of correctly charged Asn-tRNA(Asn) or Gln-tRNA(Gln) through the transamidation of misacylated Asp-tRNA(Asn) or Glu-tRNA(Gln) in organisms which lack either or both of asparaginyl-tRNA or glutaminyl-tRNA synthetases. The reaction takes place in the presence of glutamine and ATP through an activated phospho-Asp-tRNA(Asn) or phospho-Glu-tRNA(Gln). This chain is Aspartyl/glutamyl-tRNA(Asn/Gln) amidotransferase subunit C, found in Micrococcus luteus (strain ATCC 4698 / DSM 20030 / JCM 1464 / CCM 169 / CCUG 5858 / IAM 1056 / NBRC 3333 / NCIMB 9278 / NCTC 2665 / VKM Ac-2230) (Micrococcus lysodeikticus).